The following is a 152-amino-acid chain: Holo-[acyl-carrier-protein] synthase (152 aa).

2 residues coordinate Mg(2+): D7 and E60.

The protein belongs to the P-Pant transferase superfamily. AcpS family. It depends on Mg(2+) as a cofactor.

It is found in the cytoplasm. The catalysed reaction is apo-[ACP] + CoA = holo-[ACP] + adenosine 3',5'-bisphosphate + H(+). Transfers the 4'-phosphopantetheine moiety from coenzyme A to a Ser of acyl-carrier-protein. The sequence is that of Holo-[acyl-carrier-protein] synthase from Bifidobacterium adolescentis (strain ATCC 15703 / DSM 20083 / NCTC 11814 / E194a).